Reading from the N-terminus, the 346-residue chain is Probable long-chain-alcohol O-fatty-acyltransferase 6 (346 aa).

The next 8 helical transmembrane spans lie at 7–27 (LFIQ…YLTP), 36–56 (LLSV…FSTV), 59–79 (SFTI…LFAL), 116–136 (FPKW…LQAY), 146–166 (FLLG…LTLI), 228–248 (FFAI…LYFY), 255–275 (TWEV…EVAL), and 289–309 (PAVS…WLFS).

It belongs to the wax synthase family.

It localises to the membrane. The enzyme catalyses a long chain fatty alcohol + a fatty acyl-CoA = a wax ester + CoA. In terms of biological role, catalyzes the final step in the synthesis of long-chain linear esters (waxes). The polypeptide is Probable long-chain-alcohol O-fatty-acyltransferase 6 (AT6) (Arabidopsis thaliana (Mouse-ear cress)).